Reading from the N-terminus, the 376-residue chain is Queuine tRNA-ribosyltransferase (376 aa).

Aspartate 93 functions as the Proton acceptor in the catalytic mechanism. Residues 93 to 97 (DSGGF), aspartate 147, glutamine 191, and glycine 218 each bind substrate. The tract at residues 249–255 (GVGKPED) is RNA binding. The Nucleophile role is filled by aspartate 268. The interval 273 to 277 (TRNAR) is RNA binding; important for wobble base 34 recognition. Residues cysteine 306, cysteine 308, cysteine 311, and histidine 337 each contribute to the Zn(2+) site.

This sequence belongs to the queuine tRNA-ribosyltransferase family. In terms of assembly, homodimer. Within each dimer, one monomer is responsible for RNA recognition and catalysis, while the other monomer binds to the replacement base PreQ1. Zn(2+) is required as a cofactor.

The catalysed reaction is 7-aminomethyl-7-carbaguanine + guanosine(34) in tRNA = 7-aminomethyl-7-carbaguanosine(34) in tRNA + guanine. It functions in the pathway tRNA modification; tRNA-queuosine biosynthesis. In terms of biological role, catalyzes the base-exchange of a guanine (G) residue with the queuine precursor 7-aminomethyl-7-deazaguanine (PreQ1) at position 34 (anticodon wobble position) in tRNAs with GU(N) anticodons (tRNA-Asp, -Asn, -His and -Tyr). Catalysis occurs through a double-displacement mechanism. The nucleophile active site attacks the C1' of nucleotide 34 to detach the guanine base from the RNA, forming a covalent enzyme-RNA intermediate. The proton acceptor active site deprotonates the incoming PreQ1, allowing a nucleophilic attack on the C1' of the ribose to form the product. After dissociation, two additional enzymatic reactions on the tRNA convert PreQ1 to queuine (Q), resulting in the hypermodified nucleoside queuosine (7-(((4,5-cis-dihydroxy-2-cyclopenten-1-yl)amino)methyl)-7-deazaguanosine). In Histophilus somni (strain 129Pt) (Haemophilus somnus), this protein is Queuine tRNA-ribosyltransferase.